A 1470-amino-acid polypeptide reads, in one-letter code: Transient receptor potential cation channel subfamily M member 2 (1470 aa).

Residues 1–725 (MDEAALEPTL…GELSVDNPHW (725 aa)) are Cytoplasmic-facing. Residues tyrosine 267, arginine 274, 305–308 (GPGT), and arginine 330 each bind ADP-D-ribose. An intramembrane segment occupies 726–738 (KVLLCMIFFPLIY). At 739 to 808 (TGFLTFRRDE…MSFLKSPQVK (70 aa)) the chain is on the cytoplasmic side. Residues 809–829 (FYWNIASYFGFLWLFAVVLMI) traverse the membrane as a helical segment. At 830–836 (DFQTSPS) the chain is on the extracellular side. The helical transmembrane segment at 837 to 857 (WRELLLYVWLTSLVCEEIRQL) threads the bilayer. The Ca(2+) site is built by glutamate 853 and glutamine 856. The Cytoplasmic segment spans residues 858 to 876 (YHDFDGSGFRRKAKMYIKD). A helical membrane pass occupies residues 877–897 (LWNILDVLSIVLFIAGLICRL). Residue asparagine 879 coordinates Ca(2+). Over 898 to 905 (QASDTVFY) the chain is Extracellular. Residues 906 to 926 (IGKVILCIDFIIFCLRLMAIF) form a helical membrane-spanning segment. At 927–941 (SISRTLGPKIIIVRR) the chain is on the cytoplasmic side. The chain crosses the membrane as a helical span at residues 942–968 (MMLDLFFFMFLLSIWVVAYGVAKQGIL). Over 969-977 (IENEERLNW) the chain is Extracellular. An intramembrane region (pore-forming) is located at residues 978-1002 (IIRGAVYEPYITIFGNFPTNIDNTL). The Selectivity filter signature appears at 991–993 (FGN). Topologically, residues 1003-1034 (FDISSCSVNASDPLKPKCPMLNADNTPVFPEW) are extracellular. Cysteine 1008 and cysteine 1020 are disulfide-bonded. Asparagine 1011 carries N-linked (GlcNAc...) asparagine glycosylation. Residues 1035–1059 (LTIMMLCVYLLFANILLLNLLIAIF) form a helical membrane-spanning segment. The Cytoplasmic segment spans residues 1060–1087 (NYTFQEVQDNTDTIWKFQRYELIKEYHS). Glutamate 1084 provides a ligand contact to Ca(2+). An intramembrane segment occupies 1088-1105 (RPALPPPFILLSHLILFI). Over 1106–1470 (RGVFLRDLPQ…QIAHHHNTYF (365 aa)) the chain is Cytoplasmic. The interval 1157-1470 (HRIHDTAEKV…QIAHHHNTYF (314 aa)) is divergent Nudix hydrolase-like domain. 2 disordered regions span residues 1215–1256 (KSKV…LQYP) and 1281–1314 (PPVYNQQDSSESDTSALDKHRNPGGRTGIRGKGA). Positions 1231 to 1244 (DDGDSSGQETDDEE) are enriched in acidic residues. Residues 1283 to 1295 (VYNQQDSSESDTS) show a composition bias toward polar residues. ADP-D-ribose is bound by residues aspartate 1398 and arginine 1400.

The protein belongs to the transient receptor (TC 1.A.4) family. LTrpC subfamily. TRPM2 sub-subfamily. In terms of assembly, homotetramer.

It is found in the cell membrane. The enzyme catalyses Ca(2+)(in) = Ca(2+)(out). It carries out the reaction Na(+)(in) = Na(+)(out). Activated by intracellular ADP-ribose. Ca(2+) and PI(4,5)P2 are required for channel opening by ADP-ribose. Its function is as follows. Nonselective, voltage-independent cation channel that mediates Ca(2+) influx, leading to increased cytoplasmic Ca(2+) levels. Functions as a ligand-gated ion channel, gated by intracellular adenosine diphosphate ribose (ADP-ribose), Ca(2+), warm temperature, and oxidative stress. Binding of ADP-ribose to the cytoplasmic N-terminal region causes a conformation change; the channel is primed but still requires Ca(2+) binding to trigger channel opening. The sequence is that of Transient receptor potential cation channel subfamily M member 2 from Danio rerio (Zebrafish).